We begin with the raw amino-acid sequence, 358 residues long: Type II restriction enzyme HpaII (358 aa).

In terms of assembly, homodimer.

It carries out the reaction Endonucleolytic cleavage of DNA to give specific double-stranded fragments with terminal 5'-phosphates.. In terms of biological role, an E and P subtype restriction enzyme that recognizes the double-stranded sequence 5'-CCGG-3' and cleaves after C-1. In Haemophilus parainfluenzae, this protein is Type II restriction enzyme HpaII.